The sequence spans 136 residues: uncharacterized protein (136 aa).

A run of 2 helical transmembrane segments spans residues 25–47 and 78–97; these read ILKA…PHAF and ITGA…LLTA.

The protein localises to the cell membrane. This is an uncharacterized protein from Bacillus subtilis (strain 168).